A 339-amino-acid chain; its full sequence is ADP,ATP carrier protein (339 aa).

3 Solcar repeats span residues 39-133 (MAFV…IKGL), 145-234 (RFFV…AKGV), and 246-328 (AKWA…IKKF). The next 5 helical transmembrane spans lie at 41 to 70 (FVKD…LLLQ), 110 to 134 (LANV…KGLF), 144 to 164 (WRFF…SLLI), 212 to 232 (VSVQ…DTAK), and 245 to 265 (FAKW…SYPF). Residues R115 and K127 each contribute to the ADP site. R269 is a binding site for ADP. The interval 269-274 (RRRLMM) is important for transport activity. The short motif at 269 to 274 (RRRLMM) is the Nucleotide carrier signature motif element. Residues 305-322 (AWSNVLRGAGGAFVLVLY) form a helical membrane-spanning segment.

It belongs to the mitochondrial carrier (TC 2.A.29) family. In terms of assembly, monomer.

The protein resides in the mitochondrion inner membrane. It carries out the reaction ADP(in) + ATP(out) = ADP(out) + ATP(in). The matrix-open state (m-state) is inhibited by the membrane-permeable bongkrekic acid (BKA). The cytoplasmic-open state (c-state) is inhibited by the membrane-impermeable toxic inhibitor carboxyatractyloside (CATR). Its function is as follows. ADP:ATP antiporter that mediates import of ADP into the mitochondrial matrix for ATP synthesis, and export of ATP out to fuel the cell. Cycles between the cytoplasmic-open state (c-state) and the matrix-open state (m-state): operates by the alternating access mechanism with a single substrate-binding site intermittently exposed to either the cytosolic (c-state) or matrix (m-state) side of the inner mitochondrial membrane. This chain is ADP,ATP carrier protein, found in Parachlorella kessleri (Green alga).